A 357-amino-acid chain; its full sequence is UDP-N-acetylglucosamine--N-acetylmuramyl-(pentapeptide) pyrophosphoryl-undecaprenol N-acetylglucosamine transferase (357 aa).

Residues 13–15 (TGG), Asn122, Arg163, Ser191, and Gln288 contribute to the UDP-N-acetyl-alpha-D-glucosamine site.

Belongs to the glycosyltransferase 28 family. MurG subfamily.

It localises to the cell inner membrane. It catalyses the reaction di-trans,octa-cis-undecaprenyl diphospho-N-acetyl-alpha-D-muramoyl-L-alanyl-D-glutamyl-meso-2,6-diaminopimeloyl-D-alanyl-D-alanine + UDP-N-acetyl-alpha-D-glucosamine = di-trans,octa-cis-undecaprenyl diphospho-[N-acetyl-alpha-D-glucosaminyl-(1-&gt;4)]-N-acetyl-alpha-D-muramoyl-L-alanyl-D-glutamyl-meso-2,6-diaminopimeloyl-D-alanyl-D-alanine + UDP + H(+). It participates in cell wall biogenesis; peptidoglycan biosynthesis. In terms of biological role, cell wall formation. Catalyzes the transfer of a GlcNAc subunit on undecaprenyl-pyrophosphoryl-MurNAc-pentapeptide (lipid intermediate I) to form undecaprenyl-pyrophosphoryl-MurNAc-(pentapeptide)GlcNAc (lipid intermediate II). The protein is UDP-N-acetylglucosamine--N-acetylmuramyl-(pentapeptide) pyrophosphoryl-undecaprenol N-acetylglucosamine transferase of Gloeobacter violaceus (strain ATCC 29082 / PCC 7421).